The following is a 468-amino-acid chain: PE family protein PE3 (468 aa).

In terms of domain architecture, PE spans Met1 to Ala92. Residues Pro154–Tyr375 form the PE-PPE domain.

It belongs to the mycobacterial PE family.

The protein resides in the secreted. Its subcellular location is the cell wall. Plays significant roles in mycobacterial persistence during infection and modulates host immune response. The sequence is that of PE family protein PE3 from Mycobacterium tuberculosis (strain ATCC 25618 / H37Rv).